A 505-amino-acid chain; its full sequence is Maturase K (505 aa).

Belongs to the intron maturase 2 family. MatK subfamily.

The protein resides in the plastid. It localises to the chloroplast. In terms of biological role, usually encoded in the trnK tRNA gene intron. Probably assists in splicing its own and other chloroplast group II introns. The sequence is that of Maturase K from Froelichia floridana (Florida snake-cotton).